The following is a 492-amino-acid chain: Aspartyl/glutamyl-tRNA(Asn/Gln) amidotransferase subunit B (492 aa).

It belongs to the GatB/GatE family. GatB subfamily. Heterotrimer of A, B and C subunits.

It carries out the reaction L-glutamyl-tRNA(Gln) + L-glutamine + ATP + H2O = L-glutaminyl-tRNA(Gln) + L-glutamate + ADP + phosphate + H(+). The enzyme catalyses L-aspartyl-tRNA(Asn) + L-glutamine + ATP + H2O = L-asparaginyl-tRNA(Asn) + L-glutamate + ADP + phosphate + 2 H(+). Its function is as follows. Allows the formation of correctly charged Asn-tRNA(Asn) or Gln-tRNA(Gln) through the transamidation of misacylated Asp-tRNA(Asn) or Glu-tRNA(Gln) in organisms which lack either or both of asparaginyl-tRNA or glutaminyl-tRNA synthetases. The reaction takes place in the presence of glutamine and ATP through an activated phospho-Asp-tRNA(Asn) or phospho-Glu-tRNA(Gln). This chain is Aspartyl/glutamyl-tRNA(Asn/Gln) amidotransferase subunit B, found in Dehalococcoides mccartyi (strain CBDB1).